A 562-amino-acid chain; its full sequence is Dihydroxy-acid dehydratase 1 (562 aa).

Asp80 contributes to the Mg(2+) binding site. Cys121 is a [2Fe-2S] cluster binding site. Asp122 and Lys123 together coordinate Mg(2+). At Lys123 the chain carries N6-carboxylysine. Cys194 lines the [2Fe-2S] cluster pocket. Position 446 (Glu446) interacts with Mg(2+). Ser472 functions as the Proton acceptor in the catalytic mechanism.

The protein belongs to the IlvD/Edd family. Homodimer. The cofactor is [2Fe-2S] cluster. Requires Mg(2+) as cofactor.

The enzyme catalyses (2R)-2,3-dihydroxy-3-methylbutanoate = 3-methyl-2-oxobutanoate + H2O. The catalysed reaction is (2R,3R)-2,3-dihydroxy-3-methylpentanoate = (S)-3-methyl-2-oxopentanoate + H2O. It participates in amino-acid biosynthesis; L-isoleucine biosynthesis; L-isoleucine from 2-oxobutanoate: step 3/4. Its pathway is amino-acid biosynthesis; L-valine biosynthesis; L-valine from pyruvate: step 3/4. Functionally, functions in the biosynthesis of branched-chain amino acids. Catalyzes the dehydration of (2R,3R)-2,3-dihydroxy-3-methylpentanoate (2,3-dihydroxy-3-methylvalerate) into 2-oxo-3-methylpentanoate (2-oxo-3-methylvalerate) and of (2R)-2,3-dihydroxy-3-methylbutanoate (2,3-dihydroxyisovalerate) into 2-oxo-3-methylbutanoate (2-oxoisovalerate), the penultimate precursor to L-isoleucine and L-valine, respectively. The sequence is that of Dihydroxy-acid dehydratase 1 from Staphylococcus saprophyticus subsp. saprophyticus (strain ATCC 15305 / DSM 20229 / NCIMB 8711 / NCTC 7292 / S-41).